The following is a 200-amino-acid chain: Glycerol-3-phosphate acyltransferase (200 aa).

Helical transmembrane passes span F4–V24, W53–G73, Q80–F100, I115–V135, and G138–F158.

Belongs to the PlsY family. In terms of assembly, probably interacts with PlsX.

The protein resides in the cell inner membrane. The enzyme catalyses an acyl phosphate + sn-glycerol 3-phosphate = a 1-acyl-sn-glycero-3-phosphate + phosphate. The protein operates within lipid metabolism; phospholipid metabolism. In terms of biological role, catalyzes the transfer of an acyl group from acyl-phosphate (acyl-PO(4)) to glycerol-3-phosphate (G3P) to form lysophosphatidic acid (LPA). This enzyme utilizes acyl-phosphate as fatty acyl donor, but not acyl-CoA or acyl-ACP. The chain is Glycerol-3-phosphate acyltransferase from Actinobacillus succinogenes (strain ATCC 55618 / DSM 22257 / CCUG 43843 / 130Z).